The primary structure comprises 491 residues: MKSHIMDSKSTKKRDLSKYFLPDIRQARKRIKKADIIKDGFEIPANIINYGEGKTYHIKTFGCQSNLRDTEVMMGMLELIGYEYNEDVNTSDLVLLNTCAVREHAESKVFADIGILDRIKKSNPNFIFGVCGCMAQEEAVVNRILKSNFNVDFIFGTHNVHRILNLLEQVIFEKNLVVEVWSHEGNVIENLPSKRTNNLKGFVNVMYGCDKFCTYCIVPMTRGKIRSRRKEDILDEVHQMISEGYKEVTLIGQNVNSYGIDFDNGENYLFNNLLEDVAKTGIERVRFTTSNPWNFTRSIVDTMKKYPNIMPHIHLPIQSGDETILKKMNRPMKIGDYIDLVDYIRANIPNCSITTDLIVGFPNETKEQFNKTLELYKRIEFDNAFTFIYSKRDGTVAAIIPDEIPLSEKKERLQELNEMVKTFSKKNNEKYVNKVLDVLVDGPSKKDKTVISGYSPQWKVVNFTGSAKSGEIVKVLITSASRFTLNGKMID.

One can recognise an MTTase N-terminal domain in the interval 54–172; the sequence is KTYHIKTFGC…ILNLLEQVIF (119 aa). 6 residues coordinate [4Fe-4S] cluster: Cys-63, Cys-99, Cys-133, Cys-209, Cys-213, and Cys-216. The region spanning 195 to 426 is the Radical SAM core domain; the sequence is RTNNLKGFVN…NEMVKTFSKK (232 aa). The TRAM domain maps to 429–491; the sequence is EKYVNKVLDV…RFTLNGKMID (63 aa).

Belongs to the methylthiotransferase family. MiaB subfamily. As to quaternary structure, monomer. Requires [4Fe-4S] cluster as cofactor.

The protein localises to the cytoplasm. It carries out the reaction N(6)-dimethylallyladenosine(37) in tRNA + (sulfur carrier)-SH + AH2 + 2 S-adenosyl-L-methionine = 2-methylsulfanyl-N(6)-dimethylallyladenosine(37) in tRNA + (sulfur carrier)-H + 5'-deoxyadenosine + L-methionine + A + S-adenosyl-L-homocysteine + 2 H(+). In terms of biological role, catalyzes the methylthiolation of N6-(dimethylallyl)adenosine (i(6)A), leading to the formation of 2-methylthio-N6-(dimethylallyl)adenosine (ms(2)i(6)A) at position 37 in tRNAs that read codons beginning with uridine. This is tRNA-2-methylthio-N(6)-dimethylallyladenosine synthase from Malacoplasma penetrans (strain HF-2) (Mycoplasma penetrans).